The chain runs to 774 residues: DNA ligase (774 aa).

NAD(+)-binding positions include 36–40 (DAVYD), 85–86 (SL), and E161. Catalysis depends on K163, which acts as the N6-AMP-lysine intermediate. R184, E221, K341, and K365 together coordinate NAD(+). The Zn(2+) site is built by C459, C462, C477, and C482. One can recognise a BRCT domain in the interval 693–774 (VQSGLLRGKT…LLEALAVTGI (82 aa)).

This sequence belongs to the NAD-dependent DNA ligase family. LigA subfamily. Requires Mg(2+) as cofactor. The cofactor is Mn(2+).

It carries out the reaction NAD(+) + (deoxyribonucleotide)n-3'-hydroxyl + 5'-phospho-(deoxyribonucleotide)m = (deoxyribonucleotide)n+m + AMP + beta-nicotinamide D-nucleotide.. In terms of biological role, DNA ligase that catalyzes the formation of phosphodiester linkages between 5'-phosphoryl and 3'-hydroxyl groups in double-stranded DNA using NAD as a coenzyme and as the energy source for the reaction. It is essential for DNA replication and repair of damaged DNA. This chain is DNA ligase, found in Trichodesmium erythraeum (strain IMS101).